Here is a 253-residue protein sequence, read N- to C-terminus: tRNA pseudouridine synthase A (253 aa).

D53 serves as the catalytic Nucleophile. Y111 is a binding site for substrate.

It belongs to the tRNA pseudouridine synthase TruA family. As to quaternary structure, homodimer.

The catalysed reaction is uridine(38/39/40) in tRNA = pseudouridine(38/39/40) in tRNA. Formation of pseudouridine at positions 38, 39 and 40 in the anticodon stem and loop of transfer RNAs. The sequence is that of tRNA pseudouridine synthase A from Chlorobium luteolum (strain DSM 273 / BCRC 81028 / 2530) (Pelodictyon luteolum).